A 541-amino-acid polypeptide reads, in one-letter code: 2-succinyl-5-enolpyruvyl-6-hydroxy-3-cyclohexene-1-carboxylate synthase (541 aa).

It belongs to the TPP enzyme family. MenD subfamily. Homodimer. The cofactor is Mg(2+). Mn(2+) serves as cofactor. Thiamine diphosphate is required as a cofactor.

The enzyme catalyses isochorismate + 2-oxoglutarate + H(+) = 5-enolpyruvoyl-6-hydroxy-2-succinyl-cyclohex-3-ene-1-carboxylate + CO2. It participates in quinol/quinone metabolism; 1,4-dihydroxy-2-naphthoate biosynthesis; 1,4-dihydroxy-2-naphthoate from chorismate: step 2/7. The protein operates within quinol/quinone metabolism; menaquinone biosynthesis. In terms of biological role, catalyzes the thiamine diphosphate-dependent decarboxylation of 2-oxoglutarate and the subsequent addition of the resulting succinic semialdehyde-thiamine pyrophosphate anion to isochorismate to yield 2-succinyl-5-enolpyruvyl-6-hydroxy-3-cyclohexene-1-carboxylate (SEPHCHC). The chain is 2-succinyl-5-enolpyruvyl-6-hydroxy-3-cyclohexene-1-carboxylate synthase from Rhodococcus opacus (strain B4).